A 231-amino-acid polypeptide reads, in one-letter code: Protein crossbronx homolog (231 aa).

The 155-residue stretch at 14 to 168 folds into the UBC core domain; the sequence is LQEYKILTEY…VEECVRLSQA (155 aa).

The protein belongs to the ubiquitin-conjugating enzyme family. FTS subfamily.

This is Protein crossbronx homolog from Culex quinquefasciatus (Southern house mosquito).